The primary structure comprises 286 residues: MPELPEVEVVRRGLEDHMVGHTIVSATVLHPRAARNQLGGGPEIEANIAGLRVSAAKRRGKFLWLELIDAPSGETRPDLGLLVHLGMSGQMLIKEPDAPISPHLRAKVELDNGDEVWFVDQRTFGYWWLGDLVDGVPERVSHIATDVLDESADFSAIARNLKSRKSEIKRLLLNQEIVSGIGNIYADEMLWQAKIHPLQRADRLSLARLEELLQAGKDVMTKALAQGGTSFDALYVNVNGNSGYFALSLNAYAQTGEPCGRCGTLIIRESFMNRGSHYCPNCQKRR.

Catalysis depends on Pro2, which acts as the Schiff-base intermediate with DNA. Glu3 serves as the catalytic Proton donor. Lys61 (proton donor; for beta-elimination activity) is an active-site residue. Residues His103, Arg122, and Arg164 each coordinate DNA. The segment at Asn250–Lys284 adopts an FPG-type zinc-finger fold. Arg274 functions as the Proton donor; for delta-elimination activity in the catalytic mechanism.

Belongs to the FPG family. Monomer. The cofactor is Zn(2+).

The enzyme catalyses Hydrolysis of DNA containing ring-opened 7-methylguanine residues, releasing 2,6-diamino-4-hydroxy-5-(N-methyl)formamidopyrimidine.. It catalyses the reaction 2'-deoxyribonucleotide-(2'-deoxyribose 5'-phosphate)-2'-deoxyribonucleotide-DNA = a 3'-end 2'-deoxyribonucleotide-(2,3-dehydro-2,3-deoxyribose 5'-phosphate)-DNA + a 5'-end 5'-phospho-2'-deoxyribonucleoside-DNA + H(+). Functionally, involved in base excision repair of DNA damaged by oxidation or by mutagenic agents. Acts as a DNA glycosylase that recognizes and removes damaged bases. Has a preference for oxidized purines, such as 7,8-dihydro-8-oxoguanine (8-oxoG). Has AP (apurinic/apyrimidinic) lyase activity and introduces nicks in the DNA strand. Cleaves the DNA backbone by beta-delta elimination to generate a single-strand break at the site of the removed base with both 3'- and 5'-phosphates. This chain is Formamidopyrimidine-DNA glycosylase, found in Corynebacterium glutamicum (strain ATCC 13032 / DSM 20300 / JCM 1318 / BCRC 11384 / CCUG 27702 / LMG 3730 / NBRC 12168 / NCIMB 10025 / NRRL B-2784 / 534).